Here is a 354-residue protein sequence, read N- to C-terminus: Rhodopsin (354 aa).

At 1–36 (MNGTEGPYFYIPMVNTTGIVRSPYDYPQYYLVNPAA) the chain is on the extracellular side. N-linked (GlcNAc...) asparagine glycosylation is found at N2 and N15. The chain crosses the membrane as a helical span at residues 37 to 61 (YAALGAYMFFLILVGFPINFLTLYV). Over 62–73 (TIEHKKLRTPLN) the chain is Cytoplasmic. A helical membrane pass occupies residues 74 to 96 (YILLNLAVANLFMVFGGFTTTMY). The Extracellular portion of the chain corresponds to 97 to 110 (TSMHGYFVLGRLGC). Cysteines 110 and 187 form a disulfide. The chain crosses the membrane as a helical span at residues 111-133 (NLEGFFATLGGEIALWSLVVLAV). A 'Ionic lock' involved in activated form stabilization motif is present at residues 134–136 (ERW). Over 134-152 (ERWMVVCKPISNFRFGENH) the chain is Cytoplasmic. A helical transmembrane segment spans residues 153-173 (AIMGLAMTWLMASACAVPPLV). Over 174–202 (GWSRYIPEGMQCSCGVDYYTRAEGFNNES) the chain is Extracellular. N200 carries an N-linked (GlcNAc...) asparagine glycan. Residues 203–224 (FVVYMFCCHFMIPLIIVFFCYG) traverse the membrane as a helical segment. Over 225–252 (RLLCAVKEAAAAQQESETTQRAEREVTR) the chain is Cytoplasmic. Residues 253-274 (MVVIMVIAFLVCWLPYASVAWW) traverse the membrane as a helical segment. The Extracellular portion of the chain corresponds to 275–286 (IFTHQGSEFGPV). A helical membrane pass occupies residues 287–308 (FMTIPAFFAKSSSIYNPMIYIC). K296 carries the N6-(retinylidene)lysine modification. Topologically, residues 309 to 354 (MNKQFRNCMITTLCCGKNPFEEEEGASSTASKTEASSVSSSSVSPA) are cytoplasmic. Residues C322 and C323 are each lipidated (S-palmitoyl cysteine). The disordered stretch occupies residues 329-354 (EEEEGASSTASKTEASSVSSSSVSPA). Low complexity predominate over residues 334 to 354 (ASSTASKTEASSVSSSSVSPA).

It belongs to the G-protein coupled receptor 1 family. Opsin subfamily. Post-translationally, phosphorylated on some or all of the serine and threonine residues present in the C-terminal region. Contains one covalently linked retinal chromophore.

It is found in the membrane. Its subcellular location is the cell projection. The protein resides in the cilium. It localises to the photoreceptor outer segment. In terms of biological role, photoreceptor required for image-forming vision at low light intensity. While most salt water fish species use retinal as chromophore, most freshwater fish use 3-dehydroretinal, or a mixture of retinal and 3-dehydroretinal. Light-induced isomerization of 11-cis to all-trans retinal triggers a conformational change that activates signaling via G-proteins. Subsequent receptor phosphorylation mediates displacement of the bound G-protein alpha subunit by arrestin and terminates signaling. The protein is Rhodopsin (rho) of Mullus surmuletus (Striped red mullet).